The chain runs to 438 residues: Xylose isomerase (438 aa).

Catalysis depends on residues H100 and D103. 7 residues coordinate Mg(2+): E231, E267, H270, D295, D306, D308, and D338.

The protein belongs to the xylose isomerase family. In terms of assembly, homotetramer. Mg(2+) serves as cofactor.

It is found in the cytoplasm. The enzyme catalyses alpha-D-xylose = alpha-D-xylulofuranose. This chain is Xylose isomerase, found in Pseudomonas syringae pv. tomato (strain ATCC BAA-871 / DC3000).